Consider the following 269-residue polypeptide: Formamidopyrimidine-DNA glycosylase (269 aa).

The active-site Schiff-base intermediate with DNA is Pro-2. Glu-3 functions as the Proton donor in the catalytic mechanism. The active-site Proton donor; for beta-elimination activity is Lys-57. His-90, Arg-109, and Lys-150 together coordinate DNA. An FPG-type zinc finger spans residues 235–269 (QVYGRKGEPCRICGMPVVGTKHAQRATFYCRQCQK). Arg-259 (proton donor; for delta-elimination activity) is an active-site residue.

The protein belongs to the FPG family. In terms of assembly, monomer. Requires Zn(2+) as cofactor.

The enzyme catalyses Hydrolysis of DNA containing ring-opened 7-methylguanine residues, releasing 2,6-diamino-4-hydroxy-5-(N-methyl)formamidopyrimidine.. It catalyses the reaction 2'-deoxyribonucleotide-(2'-deoxyribose 5'-phosphate)-2'-deoxyribonucleotide-DNA = a 3'-end 2'-deoxyribonucleotide-(2,3-dehydro-2,3-deoxyribose 5'-phosphate)-DNA + a 5'-end 5'-phospho-2'-deoxyribonucleoside-DNA + H(+). Its function is as follows. Involved in base excision repair of DNA damaged by oxidation or by mutagenic agents. Acts as a DNA glycosylase that recognizes and removes damaged bases. Has a preference for oxidized purines, such as 7,8-dihydro-8-oxoguanine (8-oxoG). Has AP (apurinic/apyrimidinic) lyase activity and introduces nicks in the DNA strand. Cleaves the DNA backbone by beta-delta elimination to generate a single-strand break at the site of the removed base with both 3'- and 5'-phosphates. In Klebsiella pneumoniae subsp. pneumoniae (strain ATCC 700721 / MGH 78578), this protein is Formamidopyrimidine-DNA glycosylase.